A 185-amino-acid polypeptide reads, in one-letter code: Potassium-transporting ATPase KdpC subunit (185 aa).

The chain crosses the membrane as a helical span at residues 11-31 (LALLMTLVTGALYPLAVTGIA).

The protein belongs to the KdpC family. As to quaternary structure, the system is composed of three essential subunits: KdpA, KdpB and KdpC.

It localises to the cell inner membrane. In terms of biological role, part of the high-affinity ATP-driven potassium transport (or Kdp) system, which catalyzes the hydrolysis of ATP coupled with the electrogenic transport of potassium into the cytoplasm. This subunit acts as a catalytic chaperone that increases the ATP-binding affinity of the ATP-hydrolyzing subunit KdpB by the formation of a transient KdpB/KdpC/ATP ternary complex. This Pseudomonas putida (strain ATCC 47054 / DSM 6125 / CFBP 8728 / NCIMB 11950 / KT2440) protein is Potassium-transporting ATPase KdpC subunit.